Consider the following 146-residue polypeptide: Leghemoglobin Lb120-8 (146 aa).

Positions 2-146 (GFTEKQEALV…LASAIKKAMN (145 aa)) constitute a Globin domain. Nitrated tyrosine is present on residues Tyr-24 and Tyr-29. A heme b-binding site is contributed by Ser-44. Phosphoserine is present on Ser-44. His-61 contacts O2. Residues Lys-64, His-93, and Lys-96 each coordinate heme b. Tyr-134 is subject to Nitrated tyrosine.

It belongs to the plant globin family. As to quaternary structure, monomer. In terms of processing, nitrated in effective nodules and particularly in hypoxic conditions; this mechanism may play a protective role in the symbiosis by buffering toxic peroxynitrite NO(2)(-). Nitration level decrease during nodule senescence. Phosphorylation at Ser-44 disrupts the molecular environment of its porphyrin ring oxygen binding pocket, thus leading to a reduced oxygen consumption and to the delivery of oxygen O(2) to symbiosomes. As to expression, root nodules.

The protein localises to the cytoplasm. The protein resides in the cytosol. Its subcellular location is the nucleus. Functionally, leghemoglobin that reversibly binds oxygen O(2) through a pentacoordinated heme iron. In root nodules, facilitates the diffusion of oxygen to the bacteroids while preventing the bacterial nitrogenase from being inactivated by buffering dioxygen, nitric oxide and carbon monoxide, and promoting the formation of reactive oxygen species (ROS, e.g. H(2)O(2)). This role is essential for symbiotic nitrogen fixation (SNF). This Pisum sativum (Garden pea) protein is Leghemoglobin Lb120-8.